The primary structure comprises 723 residues: BBSome complex assembly protein BBS10 (723 aa).

Belongs to the TCP-1 chaperonin family. As to quaternary structure, component of a complex composed at least of MKKS, BBS10, BBS12, TCP1, CCT2, CCT3, CCT4, CCT5 and CCT8.

The protein localises to the cell projection. The protein resides in the cilium. Functionally, probable molecular chaperone that assists the folding of proteins upon ATP hydrolysis. Plays a role in the assembly of BBSome, a complex involved in ciliogenesis regulating transports vesicles to the cilia. Involved in adipogenic differentiation. The protein is BBSome complex assembly protein BBS10 (BBS10) of Pongo abelii (Sumatran orangutan).